Consider the following 382-residue polypeptide: Serine/arginine-rich splicing factor SR45a (382 aa).

Composition is skewed to low complexity over residues 30–45 (PMSY…SLSP), 54–68 (VSRS…SVSS), 177–195 (PSYS…SRSY), and 202–219 (SYSP…YSPF). Disordered regions lie at residues 30-76 (PMSY…PGNS) and 150-382 (KARR…SVSP). The span at 288–316 (RARDRSCSPYYRGRDRSYSPHYQGRDRSY) shows a compositional bias: basic and acidic residues. The span at 329–343 (VSGSVSPGGRSMSRS) shows a compositional bias: low complexity. The span at 345–361 (SPRKGRKESRSKSRRHD) shows a compositional bias: basic residues. Low complexity predominate over residues 364 to 382 (SSMCHSRSARSSTSRSVSP).

The protein belongs to the splicing factor SR family. SR45 subfamily. In terms of assembly, component of the spliceosome. Homodimer. Interacts with PRP38, SCL28, SR45, RNU1 and U2AF35B. Post-translationally, phosphorylated. Expressed in leaves, stems and roots.

Its subcellular location is the nucleus speckle. In terms of biological role, probable splicing factor involved in constitutive and/or alternative splicing events. May bridge the 5' and 3' components of the spliceosome. In Arabidopsis thaliana (Mouse-ear cress), this protein is Serine/arginine-rich splicing factor SR45a (SR45A).